Here is a 367-residue protein sequence, read N- to C-terminus: UDP-N-acetylglucosamine--N-acetylmuramyl-(pentapeptide) pyrophosphoryl-undecaprenol N-acetylglucosamine transferase (367 aa).

UDP-N-acetyl-alpha-D-glucosamine-binding positions include 15-17, Asn-127, Arg-163, Ser-191, Ile-249, and Gln-294; that span reads TGG.

Belongs to the glycosyltransferase 28 family. MurG subfamily.

The protein resides in the cell inner membrane. It catalyses the reaction di-trans,octa-cis-undecaprenyl diphospho-N-acetyl-alpha-D-muramoyl-L-alanyl-D-glutamyl-meso-2,6-diaminopimeloyl-D-alanyl-D-alanine + UDP-N-acetyl-alpha-D-glucosamine = di-trans,octa-cis-undecaprenyl diphospho-[N-acetyl-alpha-D-glucosaminyl-(1-&gt;4)]-N-acetyl-alpha-D-muramoyl-L-alanyl-D-glutamyl-meso-2,6-diaminopimeloyl-D-alanyl-D-alanine + UDP + H(+). The protein operates within cell wall biogenesis; peptidoglycan biosynthesis. In terms of biological role, cell wall formation. Catalyzes the transfer of a GlcNAc subunit on undecaprenyl-pyrophosphoryl-MurNAc-pentapeptide (lipid intermediate I) to form undecaprenyl-pyrophosphoryl-MurNAc-(pentapeptide)GlcNAc (lipid intermediate II). In Burkholderia mallei (strain NCTC 10247), this protein is UDP-N-acetylglucosamine--N-acetylmuramyl-(pentapeptide) pyrophosphoryl-undecaprenol N-acetylglucosamine transferase.